The sequence spans 190 residues: Lysozyme g (190 aa).

Positions Met1 to Lys10 are enriched in basic and acidic residues. The disordered stretch occupies residues Met1–Ser31. Residues Glu71 and Asp84 contribute to the active site.

The protein belongs to the glycosyl hydrolase 23 family.

It carries out the reaction Hydrolysis of (1-&gt;4)-beta-linkages between N-acetylmuramic acid and N-acetyl-D-glucosamine residues in a peptidoglycan and between N-acetyl-D-glucosamine residues in chitodextrins.. The chain is Lysozyme g from Takifugu rubripes (Japanese pufferfish).